The following is a 685-amino-acid chain: UvrABC system protein C (685 aa).

A GIY-YIG domain is found at 15–93 (ALPGVYRYFD…IKTQNPRFNI (79 aa)). The UVR domain occupies 214–249 (QELLQAMEARMMAYSGQLAFEQAAEVRNQMQALSRV). Low complexity predominate over residues 365–388 (AQGGDHAPAAQGGDPPPAASSGGH). Residues 365 to 391 (AQGGDHAPAAQGGDPPPAASSGGHPLR) form a disordered region.

Belongs to the UvrC family. As to quaternary structure, interacts with UvrB in an incision complex.

The protein localises to the cytoplasm. In terms of biological role, the UvrABC repair system catalyzes the recognition and processing of DNA lesions. UvrC both incises the 5' and 3' sides of the lesion. The N-terminal half is responsible for the 3' incision and the C-terminal half is responsible for the 5' incision. The chain is UvrABC system protein C from Verminephrobacter eiseniae (strain EF01-2).